Consider the following 303-residue polypeptide: Mevalonate kinase (303 aa).

Pro-90–Ala-100 serves as a coordination point for ATP. The Proton acceptor role is filled by Asp-141.

Belongs to the GHMP kinase family. Mevalonate kinase subfamily. As to quaternary structure, homodimer. Mg(2+) is required as a cofactor.

It is found in the cytoplasm. The catalysed reaction is (R)-mevalonate + ATP = (R)-5-phosphomevalonate + ADP + H(+). It participates in isoprenoid biosynthesis; isopentenyl diphosphate biosynthesis via mevalonate pathway; isopentenyl diphosphate from (R)-mevalonate: step 1/3. In terms of biological role, catalyzes the phosphorylation of (R)-mevalonate (MVA) to (R)-mevalonate 5-phosphate (MVAP). Functions in the mevalonate (MVA) pathway leading to isopentenyl diphosphate (IPP), a key precursor for the biosynthesis of isoprenoid compounds such as archaeal membrane lipids. The polypeptide is Mevalonate kinase (Methanothermobacter thermautotrophicus (strain ATCC 29096 / DSM 1053 / JCM 10044 / NBRC 100330 / Delta H) (Methanobacterium thermoautotrophicum)).